Reading from the N-terminus, the 245-residue chain is tRNA (guanine-N(7)-)-methyltransferase (245 aa).

S-adenosyl-L-methionine contacts are provided by Glu-71, Glu-96, Asp-123, and Asp-146. Residue Asp-146 is part of the active site. Residue Lys-150 coordinates substrate. The interval 152–157 is interaction with RNA; sequence KHNKRR. Substrate contacts are provided by residues Asp-182 and 224–227; that span reads TKFE.

Belongs to the class I-like SAM-binding methyltransferase superfamily. TrmB family.

It carries out the reaction guanosine(46) in tRNA + S-adenosyl-L-methionine = N(7)-methylguanosine(46) in tRNA + S-adenosyl-L-homocysteine. Its pathway is tRNA modification; N(7)-methylguanine-tRNA biosynthesis. Its function is as follows. Catalyzes the formation of N(7)-methylguanine at position 46 (m7G46) in tRNA. In Albidiferax ferrireducens (strain ATCC BAA-621 / DSM 15236 / T118) (Rhodoferax ferrireducens), this protein is tRNA (guanine-N(7)-)-methyltransferase.